The sequence spans 291 residues: uncharacterized protein (291 aa).

Solcar repeat units lie at residues 15-93 (PGPV…IKKS), 104-190 (PRTV…IKQS), and 201-287 (LSTV…VMEI). 6 helical membrane-spanning segments follow: residues 21–41 (IIAG…AEFA), 70–90 (STVI…FDSI), 108–128 (LAGL…FESI), 169–189 (TVAR…SIKQ), 201–221 (LSTV…VYCT), and 259–280 (FWSG…VFTV).

This sequence belongs to the mitochondrial carrier (TC 2.A.29) family.

The protein localises to the mitochondrion inner membrane. This is an uncharacterized protein from Schizosaccharomyces pombe (strain 972 / ATCC 24843) (Fission yeast).